Reading from the N-terminus, the 228-residue chain is 2-C-methyl-D-erythritol 4-phosphate cytidylyltransferase (228 aa).

This sequence belongs to the IspD/TarI cytidylyltransferase family. IspD subfamily.

It catalyses the reaction 2-C-methyl-D-erythritol 4-phosphate + CTP + H(+) = 4-CDP-2-C-methyl-D-erythritol + diphosphate. Its pathway is isoprenoid biosynthesis; isopentenyl diphosphate biosynthesis via DXP pathway; isopentenyl diphosphate from 1-deoxy-D-xylulose 5-phosphate: step 2/6. Its function is as follows. Catalyzes the formation of 4-diphosphocytidyl-2-C-methyl-D-erythritol from CTP and 2-C-methyl-D-erythritol 4-phosphate (MEP). The sequence is that of 2-C-methyl-D-erythritol 4-phosphate cytidylyltransferase from Actinobacillus pleuropneumoniae serotype 3 (strain JL03).